The sequence spans 135 residues: Large ribosomal subunit protein uL16c (135 aa).

Belongs to the universal ribosomal protein uL16 family. Part of the 50S ribosomal subunit.

The protein resides in the plastid. Its subcellular location is the chloroplast. The polypeptide is Large ribosomal subunit protein uL16c (Eucalyptus globulus subsp. globulus (Tasmanian blue gum)).